We begin with the raw amino-acid sequence, 249 residues long: Coproheme decarboxylase (249 aa).

Fe-coproporphyrin III contacts are provided by residues arginine 131, 145-149, histidine 172, and glutamine 185; that span reads YPMDK. Residue tyrosine 145 is part of the active site.

It belongs to the ChdC family. Type 1 subfamily. The cofactor is Fe-coproporphyrin III.

It catalyses the reaction Fe-coproporphyrin III + 2 H2O2 + 2 H(+) = heme b + 2 CO2 + 4 H2O. The enzyme catalyses Fe-coproporphyrin III + H2O2 + H(+) = harderoheme III + CO2 + 2 H2O. The catalysed reaction is harderoheme III + H2O2 + H(+) = heme b + CO2 + 2 H2O. Its pathway is porphyrin-containing compound metabolism; protoheme biosynthesis. In terms of biological role, involved in coproporphyrin-dependent heme b biosynthesis. Catalyzes the decarboxylation of Fe-coproporphyrin III (coproheme) to heme b (protoheme IX), the last step of the pathway. The reaction occurs in a stepwise manner with a three-propionate intermediate. The polypeptide is Coproheme decarboxylase (Staphylococcus epidermidis (strain ATCC 12228 / FDA PCI 1200)).